The sequence spans 241 residues: tRNA pseudouridine synthase B (241 aa).

Asp-45 (nucleophile) is an active-site residue.

It belongs to the pseudouridine synthase TruB family. Type 1 subfamily.

The catalysed reaction is uridine(55) in tRNA = pseudouridine(55) in tRNA. Functionally, responsible for synthesis of pseudouridine from uracil-55 in the psi GC loop of transfer RNAs. This chain is tRNA pseudouridine synthase B, found in Opitutus terrae (strain DSM 11246 / JCM 15787 / PB90-1).